Here is a 491-residue protein sequence, read N- to C-terminus: Glycogen synthase 1 (491 aa).

Position 15 (K15) interacts with ADP-alpha-D-glucose.

This sequence belongs to the glycosyltransferase 1 family. Bacterial/plant glycogen synthase subfamily.

The enzyme catalyses [(1-&gt;4)-alpha-D-glucosyl](n) + ADP-alpha-D-glucose = [(1-&gt;4)-alpha-D-glucosyl](n+1) + ADP + H(+). Its pathway is glycan biosynthesis; glycogen biosynthesis. Its function is as follows. Synthesizes alpha-1,4-glucan chains using ADP-glucose. The chain is Glycogen synthase 1 from Synechococcus sp. (strain JA-2-3B'a(2-13)) (Cyanobacteria bacterium Yellowstone B-Prime).